The primary structure comprises 341 residues: Protein-glutamate methylesterase/protein-glutamine glutaminase 2 (341 aa).

Residues 11 to 126 (RVLVADDSEL…DLGEYGRLIR (116 aa)) enclose the Response regulatory domain. Aspartate 62 carries the 4-aspartylphosphate modification. One can recognise a CheB-type methylesterase domain in the interval 152–341 (PARAARVEVV…IPRALRELTR (190 aa)). Catalysis depends on residues serine 166, histidine 193, and aspartate 285.

The protein belongs to the CheB family. Phosphorylated by CheA. Phosphorylation of the N-terminal regulatory domain activates the methylesterase activity.

The protein localises to the cytoplasm. The catalysed reaction is [protein]-L-glutamate 5-O-methyl ester + H2O = L-glutamyl-[protein] + methanol + H(+). The enzyme catalyses L-glutaminyl-[protein] + H2O = L-glutamyl-[protein] + NH4(+). Involved in chemotaxis. Part of a chemotaxis signal transduction system that modulates chemotaxis in response to various stimuli. Catalyzes the demethylation of specific methylglutamate residues introduced into the chemoreceptors (methyl-accepting chemotaxis proteins or MCP) by CheR. Also mediates the irreversible deamidation of specific glutamine residues to glutamic acid. The chain is Protein-glutamate methylesterase/protein-glutamine glutaminase 2 from Anaeromyxobacter dehalogenans (strain 2CP-C).